Consider the following 232-residue polypeptide: Cytidylate kinase (232 aa).

11–19 (GPAGAGKST) contacts ATP.

The protein belongs to the cytidylate kinase family. Type 1 subfamily.

It localises to the cytoplasm. The enzyme catalyses CMP + ATP = CDP + ADP. It catalyses the reaction dCMP + ATP = dCDP + ADP. This is Cytidylate kinase from Roseiflexus castenholzii (strain DSM 13941 / HLO8).